Consider the following 555-residue polypeptide: Glucose-6-phosphate isomerase (555 aa).

D-glucose 6-phosphate is bound by residues 169 to 170 (GS), 219 to 224 (SKTFTT), Q364, E368, H399, and K521. The active-site Proton donor is E368. Catalysis depends on residues H399 and K521.

This sequence belongs to the GPI family. In terms of assembly, homodimer.

The protein localises to the cytoplasm. It is found in the cytosol. The catalysed reaction is alpha-D-glucose 6-phosphate = beta-D-fructose 6-phosphate. It functions in the pathway carbohydrate degradation; glycolysis; D-glyceraldehyde 3-phosphate and glycerone phosphate from D-glucose: step 2/4. In the cytoplasm, catalyzes the conversion of glucose-6-phosphate to fructose-6-phosphate, the second step in glycolysis, and the reverse reaction during gluconeogenesis. This Candida glabrata (strain ATCC 2001 / BCRC 20586 / JCM 3761 / NBRC 0622 / NRRL Y-65 / CBS 138) (Yeast) protein is Glucose-6-phosphate isomerase (PGI1).